The chain runs to 396 residues: 2-methyl-aconitate isomerase (396 aa).

Substrate is bound by residues serine 19 and 66-70 (SSTSK). Residue cysteine 104 is the Proton donor/acceptor of the active site. Residue cysteine 104 is modified to Cysteine sulfinic acid (-SO2H). Asparagine 106, lysine 278, serine 309, and histidine 314 together coordinate substrate. The Proton donor/acceptor role is filled by methionine 318. Residue glycine 319 coordinates substrate.

It belongs to the PrpF family. Homodimer.

The enzyme catalyses 2-methyl-trans-aconitate = 2-methyl-cis-aconitate. It functions in the pathway organic acid metabolism; propanoate degradation. In terms of biological role, catalyzes the isomerization of 2-methyl-trans-aconitate to yield 2-methyl-cis-aconitate through a base-catalyzed proton abstraction coupled with a rotation about C2-C3 bond of 2-methyl-aconitate. In Cupriavidus necator (Alcaligenes eutrophus), this protein is 2-methyl-aconitate isomerase.